A 414-amino-acid polypeptide reads, in one-letter code: MSYYVLSKIFLYSGYLVIGFLSFTIFNKNLRNKIRDKLKNLYFLYYLTFFTLFIISSNLSYYFTEKQLLEDFNIFEKEFFEIHKINEQFFQKYLLNFPVPIRMELMSKFDPLYTVFNASFEKYAKNIGKSSYEIQTNYKNYIRTTNSEIKEKLEQIKENITPIYNKYKLPILNGENTEISIDENGNIIPVIKNTNGQITELLFYDQNYNLIPFKKFESYKVRFDLIPENKNINFKELINVYYLDEKNIITPIEYYKNNIDMSPYYIDLQENKDDFLKAIKIKKEYGLYIEKKKQLQNLTENDKLDDFKEFLLKNNNIFSLNTIFSNGNPIFTYAINVKAKSIINYLITKEFNINLTNQNSQTALHSAIIQKYDLNFIKSLIEKGANPNIRDGDNKLPIDYSDKTSEIYKYLIGI.

ANK repeat units lie at residues 326–355 and 359–389; these read NGNP…NINL and NSQT…NPNI.

The sequence is that of Putative ankyrin repeat protein BB_B28 from Borreliella burgdorferi (strain ATCC 35210 / DSM 4680 / CIP 102532 / B31) (Borrelia burgdorferi).